Here is a 348-residue protein sequence, read N- to C-terminus: Protein RecA (348 aa).

67–74 provides a ligand contact to ATP; that stretch reads GPESSGKT.

Belongs to the RecA family.

It localises to the cytoplasm. In terms of biological role, can catalyze the hydrolysis of ATP in the presence of single-stranded DNA, the ATP-dependent uptake of single-stranded DNA by duplex DNA, and the ATP-dependent hybridization of homologous single-stranded DNAs. It interacts with LexA causing its activation and leading to its autocatalytic cleavage. The chain is Protein RecA from Salinispora tropica (strain ATCC BAA-916 / DSM 44818 / JCM 13857 / NBRC 105044 / CNB-440).